The primary structure comprises 720 residues: Cyclic nucleotide-gated ion channel 17 (720 aa).

The Cytoplasmic segment spans residues 1 to 85; the sequence is MELRKDKLLM…SEIVLKWNWV (85 aa). A helical transmembrane segment spans residues 86–106; the sequence is FIVSCMVALFIDPLYFFVPAI. Topologically, residues 107 to 121 are extracellular; the sequence is GGDKNYPCARTDTSL. A helical membrane pass occupies residues 122–142; that stretch reads SILVTFFRTIADLFYLLHIFI. Residues 143 to 178 are Cytoplasmic-facing; sequence KFRTGFIAPNSSTRVFGRGELVMDPKAIAWRYIKSD. The chain crosses the membrane as a helical span at residues 179–199; it reads FIIDLIATLPLPQIVIWFVIS. Over 200 to 211 the chain is Extracellular; the sequence is TTKSYRFDHNNN. The chain crosses the membrane as a helical span at residues 212 to 232; that stretch reads AIALIVLLQYIPRFYLIIPLS. The Cytoplasmic segment spans residues 233–252; it reads SQIVKATGVVTKTAWAGAAY. A helical transmembrane segment spans residues 253–273; it reads NLLLYMLASHVLGAAWYILSV. At 274–377 the chain is on the extracellular side; that stretch reads DRYTSCWKSR…LSTTMFMGET (104 aa). Residues 378-398 traverse the membrane as a helical segment; that stretch reads TFAVLIAIFGLVLFAHLIGNM. Residues 399 to 720 lie on the Cytoplasmic side of the membrane; the sequence is QTYLQSLTVR…EPDFSAEHDD (322 aa). Residues 481–605 and Glu-552 each bind a nucleoside 3',5'-cyclic phosphate; that span reads FFSQ…SKKL. Residues 597–612 form a calmodulin-binding region; sequence FRRLHSKKLQHTFRFY. Positions 617–646 constitute an IQ domain; sequence RTWAACFIQAAWRRYKRRVMENNLTAIESM.

Belongs to the cyclic nucleotide-gated cation channel (TC 1.A.1.5) family. In terms of assembly, homotetramer or heterotetramer. Part of a functional complex containing PSKR1, BAK1, CNGC17, and AHA. Interacts with AHA1, AHA2, and BAK1, but not with PSKR1 or BRI1.

The protein localises to the cell membrane. In terms of biological role, probable cyclic nucleotide-gated ion channel. Forms a functional cation-translocating unit with AHAs that is activated by PSKR1/BAK1 and possibly other BAK1/RLK complexes. Required for PSK-induced protoplast expansion. The chain is Cyclic nucleotide-gated ion channel 17 from Arabidopsis thaliana (Mouse-ear cress).